The primary structure comprises 271 residues: Small ribosomal subunit protein uS3 (271 aa).

In terms of domain architecture, KH type-2 spans 40–108; that stretch reads IRKFLKKRLY…TIIVNIVEVR (69 aa). Residues 210–271 form a disordered region; that stretch reads PTRDGVNPRE…RPQRTENKGN (62 aa). The segment covering 215 to 247 has biased composition (basic and acidic residues); the sequence is VNPREESRKSDRRDNKRDNRRNDRRGNDRRGND.

It belongs to the universal ribosomal protein uS3 family. In terms of assembly, part of the 30S ribosomal subunit. Forms a tight complex with proteins S10 and S14.

Functionally, binds the lower part of the 30S subunit head. Binds mRNA in the 70S ribosome, positioning it for translation. The protein is Small ribosomal subunit protein uS3 of Clostridioides difficile (strain 630) (Peptoclostridium difficile).